The sequence spans 344 residues: Isopentenyl-diphosphate delta-isomerase (344 aa).

Residue 9-10 (RK) coordinates substrate. FMN is bound by residues 65 to 67 (AMT), S95, and N124. Substrate is bound at residue Q154. E155 contributes to the Mg(2+) binding site. FMN-binding positions include K185, T215, 259–261 (GVR), and 280–281 (SG).

Belongs to the IPP isomerase type 2 family. In terms of assembly, homooctamer. Dimer of tetramers. FMN is required as a cofactor. The cofactor is NADPH. It depends on Mg(2+) as a cofactor.

It localises to the cytoplasm. The enzyme catalyses isopentenyl diphosphate = dimethylallyl diphosphate. In terms of biological role, involved in the biosynthesis of isoprenoids. Catalyzes the 1,3-allylic rearrangement of the homoallylic substrate isopentenyl (IPP) to its allylic isomer, dimethylallyl diphosphate (DMAPP). The polypeptide is Isopentenyl-diphosphate delta-isomerase (Lacticaseibacillus paracasei (strain ATCC 334 / BCRC 17002 / CCUG 31169 / CIP 107868 / KCTC 3260 / NRRL B-441) (Lactobacillus paracasei)).